The primary structure comprises 190 residues: MSGLRPALSTFLFLLLITGGVYPLLTTALGQWWFPWQANGSLIREGDTVRGSALIGQNFTGNGYFHGRPSATAEMPYNPQASGGSNLAVSNPELDKQIAARVAALRAANPDASTSVPVELVTASASGLDNNITPQAAAWQIPRVAKARNLSVEQLTQLIAKYSQQPLVNYIGQPVVNIVELNLALDKLDE.

A helical transmembrane segment spans residues 10–30 (TFLFLLLITGGVYPLLTTALG).

The protein belongs to the KdpC family. The system is composed of three essential subunits: KdpA, KdpB and KdpC.

The protein localises to the cell inner membrane. Functionally, part of the high-affinity ATP-driven potassium transport (or Kdp) system, which catalyzes the hydrolysis of ATP coupled with the electrogenic transport of potassium into the cytoplasm. This subunit acts as a catalytic chaperone that increases the ATP-binding affinity of the ATP-hydrolyzing subunit KdpB by the formation of a transient KdpB/KdpC/ATP ternary complex. This Escherichia coli O7:K1 (strain IAI39 / ExPEC) protein is Potassium-transporting ATPase KdpC subunit.